Here is a 110-residue protein sequence, read N- to C-terminus: Large ribosomal subunit protein uL22 (110 aa).

Belongs to the universal ribosomal protein uL22 family. As to quaternary structure, part of the 50S ribosomal subunit.

In terms of biological role, this protein binds specifically to 23S rRNA; its binding is stimulated by other ribosomal proteins, e.g. L4, L17, and L20. It is important during the early stages of 50S assembly. It makes multiple contacts with different domains of the 23S rRNA in the assembled 50S subunit and ribosome. The globular domain of the protein is located near the polypeptide exit tunnel on the outside of the subunit, while an extended beta-hairpin is found that lines the wall of the exit tunnel in the center of the 70S ribosome. This chain is Large ribosomal subunit protein uL22, found in Shewanella frigidimarina (strain NCIMB 400).